We begin with the raw amino-acid sequence, 49 residues long: Putative DNA-directed RNA polymerase subunit omega (49 aa).

The protein belongs to the RNA polymerase subunit omega family.

It localises to the plastid. The protein resides in the chloroplast. It carries out the reaction RNA(n) + a ribonucleoside 5'-triphosphate = RNA(n+1) + diphosphate. Functionally, may be involved in RNA polymerase activity. The sequence is that of Putative DNA-directed RNA polymerase subunit omega (rpoZ) from Cyanidioschyzon merolae (strain NIES-3377 / 10D) (Unicellular red alga).